The sequence spans 732 residues: Protein kinase YpkA (732 aa).

Positions 136-408 (VAETDKFAEG…SNEARLHEFL (273 aa)) constitute a Protein kinase domain. ATP-binding positions include 142-150 (FAEGESHIS) and lysine 163. Aspartate 270 acts as the Proton acceptor in catalysis.

Belongs to the protein kinase superfamily. Ser/Thr protein kinase family.

Its subcellular location is the secreted. The enzyme catalyses L-seryl-[protein] + ATP = O-phospho-L-seryl-[protein] + ADP + H(+). The catalysed reaction is L-threonyl-[protein] + ATP = O-phospho-L-threonyl-[protein] + ADP + H(+). In terms of biological role, acts as a virulence determinant. The polypeptide is Protein kinase YpkA (ypkA) (Yersinia pestis).